The primary structure comprises 666 residues: 1-deoxy-D-xylulose-5-phosphate synthase (666 aa).

Thiamine diphosphate is bound by residues His-103 and 144–146 (AHS). Residue Asp-175 participates in Mg(2+) binding. Thiamine diphosphate contacts are provided by residues 176-177 (GA), Asn-204, Tyr-314, and Glu-396. Asn-204 serves as a coordination point for Mg(2+).

Belongs to the transketolase family. DXPS subfamily. In terms of assembly, homodimer. Mg(2+) serves as cofactor. Requires thiamine diphosphate as cofactor.

It catalyses the reaction D-glyceraldehyde 3-phosphate + pyruvate + H(+) = 1-deoxy-D-xylulose 5-phosphate + CO2. The protein operates within metabolic intermediate biosynthesis; 1-deoxy-D-xylulose 5-phosphate biosynthesis; 1-deoxy-D-xylulose 5-phosphate from D-glyceraldehyde 3-phosphate and pyruvate: step 1/1. Its function is as follows. Catalyzes the acyloin condensation reaction between C atoms 2 and 3 of pyruvate and glyceraldehyde 3-phosphate to yield 1-deoxy-D-xylulose-5-phosphate (DXP). In Nitrobacter winogradskyi (strain ATCC 25391 / DSM 10237 / CIP 104748 / NCIMB 11846 / Nb-255), this protein is 1-deoxy-D-xylulose-5-phosphate synthase.